The primary structure comprises 214 residues: MGRRPARCYRYCKNKPYPKSRFCRGVPDAKIRIFDLGRKKAKVDEFPLCGHMVSDEYEQLSSEALEAARICANKYMVKSCGRDGFHMRVRLHPFHVIRINKMLSCAGADRLQTGMRGAFGKPQGTVARVHIGQVIMSIRTKLQNKEHVIEALRRAKFKFPGRQKIHISKKWGFTKFNADEFEDMVAKKRLIPDGCGVKYVPSHGPLDKWRVLHS.

Belongs to the universal ribosomal protein uL16 family. Component of the 60S large ribosomal subunit (LSU).

It localises to the cytoplasm. In terms of biological role, testis-specific component of the ribosome, which is required for the transition from prophase to metaphase in male meiosis I. Compensates for the inactivated X-linked RPL10 paralog during spermatogenesis. The ribosome is a large ribonucleoprotein complex responsible for the synthesis of proteins in the cell. The small ribosomal subunit (SSU) binds messenger RNAs (mRNAs) and translates the encoded message by selecting cognate aminoacyl-transfer RNA (tRNA) molecules. The large subunit (LSU) contains the ribosomal catalytic site termed the peptidyl transferase center (PTC), which catalyzes the formation of peptide bonds, thereby polymerizing the amino acids delivered by tRNAs into a polypeptide chain. The nascent polypeptides leave the ribosome through a tunnel in the LSU and interact with protein factors that function in enzymatic processing, targeting, and the membrane insertion of nascent chains at the exit of the ribosomal tunnel. In Macaca fascicularis (Crab-eating macaque), this protein is Large ribosomal subunit protein uL16-like (RPL10L).